We begin with the raw amino-acid sequence, 205 residues long: Urease accessory protein UreG (205 aa).

10 to 17 (GPVGAGKT) contacts GTP.

The protein belongs to the SIMIBI class G3E GTPase family. UreG subfamily. In terms of assembly, homodimer. UreD, UreF and UreG form a complex that acts as a GTP-hydrolysis-dependent molecular chaperone, activating the urease apoprotein by helping to assemble the nickel containing metallocenter of UreC. The UreE protein probably delivers the nickel.

It localises to the cytoplasm. Its function is as follows. Facilitates the functional incorporation of the urease nickel metallocenter. This process requires GTP hydrolysis, probably effectuated by UreG. The protein is Urease accessory protein UreG of Corynebacterium glutamicum (strain R).